A 497-amino-acid polypeptide reads, in one-letter code: MSDIIKLTAAEIAAKIASGELTAVQVTEAHLARIEAVDEKVHAFLHVDREGALAQARAVDEKRERGEKLGPLAGVPLALKDIFTTEGIPTTVGSKILEGWIPPYDATVTKRLKAADVVILGKTNMDEFAMGSSTENSAYGPTGNPWDLTKIPGGSGGGSSAALAAFQAPLAIGTDTGGSIRQPASVTGTVGVKPTYGGVSRYGMVAFSSSLDQGGPCARTVLDAALLHEVIAGHDPMDSTSIDAPVPAVVEAARNGSVDGMRVGVVKQFRGEGYQAGVVQRFDESVELLKSLGAEIVELDCPSFDLALSAYYLIAPSECSSNLARFDGLRYGARVGDDGTHSAEEVTSLTREAGFGPEVKRRIMLGTYALSSGYYDAYYGSAQKVRTLIKQEFERAFEQVDVIVSPTTPTTAFAIGERADDPMAMYLADLCTIPTNLAGNAAMSLPCGLAPEDNLPVGLQIIAPAMKDDRLYKVGAAVEAAFVEKWGHPLIEEAPSL.

Active-site charge relay system residues include Lys-80 and Ser-155. Ser-179 functions as the Acyl-ester intermediate in the catalytic mechanism.

This sequence belongs to the amidase family. GatA subfamily. Heterotrimer of A, B and C subunits.

The catalysed reaction is L-glutamyl-tRNA(Gln) + L-glutamine + ATP + H2O = L-glutaminyl-tRNA(Gln) + L-glutamate + ADP + phosphate + H(+). In terms of biological role, allows the formation of correctly charged Gln-tRNA(Gln) through the transamidation of misacylated Glu-tRNA(Gln) in organisms which lack glutaminyl-tRNA synthetase. The reaction takes place in the presence of glutamine and ATP through an activated gamma-phospho-Glu-tRNA(Gln). In Streptomyces coelicolor (strain ATCC BAA-471 / A3(2) / M145), this protein is Glutamyl-tRNA(Gln) amidotransferase subunit A (gatA).